Consider the following 324-residue polypeptide: Thiazole synthase (324 aa).

The active-site Schiff-base intermediate with DXP is the lysine 167. 1-deoxy-D-xylulose 5-phosphate contacts are provided by residues glycine 228, 254–255 (AG), and 276–277 (NT).

It belongs to the ThiG family. As to quaternary structure, homotetramer. Forms heterodimers with either ThiH or ThiS.

It is found in the cytoplasm. The catalysed reaction is [ThiS sulfur-carrier protein]-C-terminal-Gly-aminoethanethioate + 2-iminoacetate + 1-deoxy-D-xylulose 5-phosphate = [ThiS sulfur-carrier protein]-C-terminal Gly-Gly + 2-[(2R,5Z)-2-carboxy-4-methylthiazol-5(2H)-ylidene]ethyl phosphate + 2 H2O + H(+). Its pathway is cofactor biosynthesis; thiamine diphosphate biosynthesis. In terms of biological role, catalyzes the rearrangement of 1-deoxy-D-xylulose 5-phosphate (DXP) to produce the thiazole phosphate moiety of thiamine. Sulfur is provided by the thiocarboxylate moiety of the carrier protein ThiS. In vitro, sulfur can be provided by H(2)S. The sequence is that of Thiazole synthase from Paramagnetospirillum magneticum (strain ATCC 700264 / AMB-1) (Magnetospirillum magneticum).